Here is a 540-residue protein sequence, read N- to C-terminus: BTB/POZ domain-containing protein 6-A (540 aa).

One can recognise a BTB domain in the interval 138-208 (ADVHFIVGPP…MYSDEIELAP (71 aa)).

In terms of assembly, interacts with cul3. Interacts (via BTB domain) with zbtb16/plzf. In terms of tissue distribution, expressed in the developing central nervous system.

It is found in the cytoplasm. The protein localises to the nucleus. In terms of biological role, adapter protein for the cul3 E3 ubiquitin-protein ligase complex. Promotes the export of zbtb16/plzf from the nucleus to the cytoplasm and targets zbtb16/plzf for ubiquitination and degradation. Up-regulates neurog1 expression and antagonizes zbtb16/plzf, to promote neurogenesis. The sequence is that of BTB/POZ domain-containing protein 6-A (btbd6a) from Danio rerio (Zebrafish).